The sequence spans 633 residues: Phosphomethylpyrimidine synthase (633 aa).

A compositionally biased stretch (polar residues) spans Met1–Ala13. Residues Met1–Pro20 are disordered. Substrate-binding positions include Asn221, Met250, Tyr279, His315, Ser335 to Gly337, Asp376 to Arg379, and Glu415. His419 lines the Zn(2+) pocket. Position 442 (Tyr442) interacts with substrate. His483 contributes to the Zn(2+) binding site. 3 residues coordinate [4Fe-4S] cluster: Cys563, Cys566, and Cys571.

The protein belongs to the ThiC family. Homodimer. The cofactor is [4Fe-4S] cluster.

It catalyses the reaction 5-amino-1-(5-phospho-beta-D-ribosyl)imidazole + S-adenosyl-L-methionine = 4-amino-2-methyl-5-(phosphooxymethyl)pyrimidine + CO + 5'-deoxyadenosine + formate + L-methionine + 3 H(+). The protein operates within cofactor biosynthesis; thiamine diphosphate biosynthesis. Catalyzes the synthesis of the hydroxymethylpyrimidine phosphate (HMP-P) moiety of thiamine from aminoimidazole ribotide (AIR) in a radical S-adenosyl-L-methionine (SAM)-dependent reaction. This Bradyrhizobium sp. (strain ORS 278) protein is Phosphomethylpyrimidine synthase.